The following is a 693-amino-acid chain: Glycine--tRNA ligase beta subunit (693 aa).

It belongs to the class-II aminoacyl-tRNA synthetase family. As to quaternary structure, tetramer of two alpha and two beta subunits.

It is found in the cytoplasm. It carries out the reaction tRNA(Gly) + glycine + ATP = glycyl-tRNA(Gly) + AMP + diphosphate. In Natranaerobius thermophilus (strain ATCC BAA-1301 / DSM 18059 / JW/NM-WN-LF), this protein is Glycine--tRNA ligase beta subunit.